The chain runs to 201 residues: UPF0301 protein Mvan_6057 (201 aa).

Belongs to the UPF0301 (AlgH) family.

The sequence is that of UPF0301 protein Mvan_6057 from Mycolicibacterium vanbaalenii (strain DSM 7251 / JCM 13017 / BCRC 16820 / KCTC 9966 / NRRL B-24157 / PYR-1) (Mycobacterium vanbaalenii).